The following is a 1257-amino-acid chain: Bifunctional autolysin (1257 aa).

A signal peptide spans 1–29 (MAKKFNYKLPSMVALTLVGSAVTAHQVQA). Polar residues predominate over residues 99-137 (QVNGDTRATQSTTSNNAKPVTKSTNTTAPKTNNNVTSAG). 3 disordered regions span residues 99–150 (QVNG…NSEN), 173–217 (AAPK…KYKP), and 417–441 (TQST…PSTG). 2 stretches are compositionally biased toward low complexity: residues 173 to 208 (AAPK…AAAP) and 419 to 440 (STTT…TPST). Residues 197 to 776 (ASAQPRSAAA…AVAQPKTAVK (580 aa)) are N-acetylmuramoyl-L-alanine amidase. GW domains are found at residues 444-518 (TVAA…YNTA), 520-594 (SPVN…DTAK), 613-687 (TVSS…YNNA), 689-763 (SPVN…VPAA), 785-860 (TTQT…VQNL), 862-937 (KEVK…APTA), and 944-1018 (AAKD…KELI). Residues 777-1257 (AYAVTKPQTT…GKYFDIPQYK (481 aa)) are endo-beta-N-acetylglucosaminidase.

It in the N-terminal section; belongs to the N-acetylmuramoyl-L-alanine amidase 2 family. This sequence in the C-terminal section; belongs to the glycosyl hydrolase 73 family. As to quaternary structure, oligomer; forms a ring structure at the cell surface which is important for efficient partitioning of daughter cells after cell division. Undergoes proteolytic processing to generate the two extracellular lytic enzymes, probably at the septal region on the cell surface.

The protein localises to the secreted. The enzyme catalyses Hydrolyzes the link between N-acetylmuramoyl residues and L-amino acid residues in certain cell-wall glycopeptides.. It catalyses the reaction an N(4)-(oligosaccharide-(1-&gt;3)-[oligosaccharide-(1-&gt;6)]-beta-D-Man-(1-&gt;4)-beta-D-GlcNAc-(1-&gt;4)-alpha-D-GlcNAc)-L-asparaginyl-[protein] + H2O = an oligosaccharide-(1-&gt;3)-[oligosaccharide-(1-&gt;6)]-beta-D-Man-(1-&gt;4)-D-GlcNAc + N(4)-(N-acetyl-beta-D-glucosaminyl)-L-asparaginyl-[protein]. In terms of biological role, endohydrolysis of the di-N-acetylchitobiosyl unit in high-mannose glycopeptides and glycoproteins containing the -[(Man)5(GlcNAc)2]-Asn structure. One N-acetyl-D-glucosamine residue remains attached to the protein; the rest of the oligosaccharide is released intact. Cleaves the peptidoglycan connecting the daughter cells at the end of the cell division cycle, resulting in the separation of the two newly divided cells. Acts as an autolysin in penicillin-induced lysis. The polypeptide is Bifunctional autolysin (atl) (Staphylococcus aureus (strain MRSA252)).